A 300-amino-acid polypeptide reads, in one-letter code: GTPase Era (300 aa).

The region spanning 5–176 (HSGFVCLVGR…IDVLAAALPA (172 aa)) is the Era-type G domain. Residues 13–20 (GRPNTGKS) form a G1 region. Position 13 to 20 (13 to 20 (GRPNTGKS)) interacts with GTP. Residues 39–43 (QTTRH) form a G2 region. Residues 60 to 63 (DTPG) form a G3 region. Residues 60–64 (DTPGL) and 125–128 (TKID) contribute to the GTP site. The G4 stretch occupies residues 125-128 (TKID). The G5 stretch occupies residues 155–157 (VSA). Residues 207-286 (VRDELPHSLA…YLDLRVKVAK (80 aa)) enclose the KH type-2 domain.

The protein belongs to the TRAFAC class TrmE-Era-EngA-EngB-Septin-like GTPase superfamily. Era GTPase family. As to quaternary structure, monomer.

The protein resides in the cell envelope. It localises to the secreted. It is found in the cell wall. In terms of biological role, exhibits GTPase activity. Binds RNA but is probably not involved in ribosome assembly in mycobacteria. This is GTPase Era from Mycobacterium bovis (strain ATCC BAA-935 / AF2122/97).